A 351-amino-acid polypeptide reads, in one-letter code: Phosphoribosylformylglycinamidine cyclo-ligase (351 aa).

The protein belongs to the AIR synthase family.

It is found in the cytoplasm. The catalysed reaction is 2-formamido-N(1)-(5-O-phospho-beta-D-ribosyl)acetamidine + ATP = 5-amino-1-(5-phospho-beta-D-ribosyl)imidazole + ADP + phosphate + H(+). It functions in the pathway purine metabolism; IMP biosynthesis via de novo pathway; 5-amino-1-(5-phospho-D-ribosyl)imidazole from N(2)-formyl-N(1)-(5-phospho-D-ribosyl)glycinamide: step 2/2. The protein is Phosphoribosylformylglycinamidine cyclo-ligase of Synechococcus sp. (strain JA-3-3Ab) (Cyanobacteria bacterium Yellowstone A-Prime).